The chain runs to 365 residues: Transcription factor TCP2 (365 aa).

The 59-residue stretch at 42 to 100 (GKDRHSKVLTSKGPRDRRVRLSVSTALQFYDLQDRLGYDQPSKAVEWLIKAAEDSISEL) folds into the TCP domain. Positions 130–150 (KSACSSNSDTSKNSSGLSLSR) are enriched in low complexity. Disordered regions lie at residues 130–202 (KSAC…SAPS) and 220–245 (QTHF…HPHH). The 22-residue stretch at 151 to 172 (SELRDKARERARERTAKETKER) folds into the R domain. A compositionally biased stretch (basic and acidic residues) spans 151 to 176 (SELRDKARERARERTAKETKERDHNH). Positions 177-202 (TSFTDLLNSGSDPVNSNRQWMASAPS) are enriched in polar residues.

Interacts with SPL. Interacts with CRY1. In terms of tissue distribution, expressed in cotyledons, particularly in the vascular region, in leaves, roots, buds, flowers and immature siliques.

Its subcellular location is the nucleus. Plays a pivotal role in the control of morphogenesis of shoot organs by negatively regulating the expression of boundary-specific genes such as CUC genes, probably through the induction of miRNA (e.g. miR164). Participates in ovule development. Promotes light-regulated transcription of CHS, CAB, HYH and HY5. Positively regulates photomorphogenesis (e.g. hypocotyl elongation inhibition and cotyledon opening in response to blue light). The protein is Transcription factor TCP2 of Arabidopsis thaliana (Mouse-ear cress).